We begin with the raw amino-acid sequence, 154 residues long: Spermatogenesis-associated protein 19, mitochondrial (154 aa).

The transit peptide at 1-24 (MIITTWIMYIFARKTVGLPFPPRV) directs the protein to the mitochondrion. Phosphoserine is present on residues Ser26 and Ser116.

As to expression, expressed specifically in adult testis (at protein level).

Its subcellular location is the mitochondrion outer membrane. It is found in the mitochondrion. The protein localises to the cell projection. The protein resides in the cilium. It localises to the flagellum. Its function is as follows. Essential for sperm motility and male fertility. Plays an important role in sperm motility by regulating the organization and function of the mitochondria and is also required for correct sperm midpiece assembly. The sequence is that of Spermatogenesis-associated protein 19, mitochondrial (Spata19) from Mus musculus (Mouse).